The primary structure comprises 180 residues: MAKSALFTVRNNESCPKCGAELVIRSGKHGPFLGCSQYPACDYVRPLKSSADGHIVKVLEGQVCPACGANLVLRQGRFGMFIGCINYPECEHTELIDKPDETAITCPQCRTGHLVQRRSRYGKTFHSCDRYPECQFAINFKPIAGECPECHYPLLIEKKTAQGVKHFCASKQCGKPVSAE.

To H.influenzae HI_0656.1.

This is an uncharacterized protein from Escherichia coli (strain K12).